Consider the following 438-residue polypeptide: Ribosomal protein uS12 methylthiotransferase RimO (438 aa).

In terms of domain architecture, MTTase N-terminal spans 5-115 (PRVGFVSLGC…VMSAVHTHLP (111 aa)). Residues C14, C50, C79, C146, C150, and C153 each coordinate [4Fe-4S] cluster. Residues 132-369 (LTPKHYAYLK…MAVQAEISAR (238 aa)) form the Radical SAM core domain. Residues 372–438 (ERRVGQTLQV…SEHDLWGERR (67 aa)) enclose the TRAM domain.

Belongs to the methylthiotransferase family. RimO subfamily. Requires [4Fe-4S] cluster as cofactor.

The protein resides in the cytoplasm. The catalysed reaction is L-aspartate(89)-[ribosomal protein uS12]-hydrogen + (sulfur carrier)-SH + AH2 + 2 S-adenosyl-L-methionine = 3-methylsulfanyl-L-aspartate(89)-[ribosomal protein uS12]-hydrogen + (sulfur carrier)-H + 5'-deoxyadenosine + L-methionine + A + S-adenosyl-L-homocysteine + 2 H(+). Catalyzes the methylthiolation of an aspartic acid residue of ribosomal protein uS12. The sequence is that of Ribosomal protein uS12 methylthiotransferase RimO from Chromobacterium violaceum (strain ATCC 12472 / DSM 30191 / JCM 1249 / CCUG 213 / NBRC 12614 / NCIMB 9131 / NCTC 9757 / MK).